The sequence spans 664 residues: MSTEPLSINPLSAKPLSATQEPSTSSKPSRREQRAAAQRFIETLQGTAFPNSKRIYLTGSRDDIGVPMREIQLSPTLLGGSKDDPQYEPNEPIPVYDTSGPYGDPAAQPDVHVGLAKLRANWIAERHDTEALSGVSSDFTQQRMADAGLDHLRFEHLPRPLRAKAGKRVTQLHYARQGMITPEMEFIAIRENMGRERIRGEVLRQQHPGQSFGALLPENITPEFVRQEVAAGRAIIPSNINHPESEPMIIGRNFLVKVNANIGNSAVTSSIEEEVEKLVWSTRWGADTVMDLSTGRYIHETREWILRNSPVPIGTVPIYQALEKVNGVAENLNWEMFRDTLLEQAEQGVDYFTIHAGVLLRYVPMTAKRLTGIVSRGGSIMAKWCLSHHKESFLYEHFREICEICAAYDVALSLGDGLRPGSIQDANDEAQFAELHTLGELTKIAWEYDVQVMIEGPGHVPMQMIRRNMTEELEHCHEAPFYTLGPLTTDIAPGYDHFTSGIGAAMIGWFGCAMLCYVTPKEHLGLPNKEDVKQGLITYKIAAHAADLAKGHPGAQIRDNAMSKARFEFRWEDQFNLALDPQTARAYHDETLPQESGKVAHFCSMCGPKFCSMKISQEVRDYAAKQETEAKPIEIGMAEMSQEFRSRGSELYHSATSLQAEESK.

2 stretches are compositionally biased toward polar residues: residues 1–10 (MSTEPLSINP) and 17–27 (SATQEPSTSSK). The segment at 1-37 (MSTEPLSINPLSAKPLSATQEPSTSSKPSRREQRAAA) is disordered. Residues asparagine 261, methionine 290, tyrosine 319, histidine 355, 375 to 377 (SRG), 416 to 419 (DGLR), and glutamate 455 each bind substrate. Histidine 459 is a binding site for Zn(2+). Tyrosine 482 serves as a coordination point for substrate. Histidine 523 lines the Zn(2+) pocket. 3 residues coordinate [4Fe-4S] cluster: cysteine 603, cysteine 606, and cysteine 611.

The protein belongs to the ThiC family. Homodimer. The cofactor is [4Fe-4S] cluster.

It carries out the reaction 5-amino-1-(5-phospho-beta-D-ribosyl)imidazole + S-adenosyl-L-methionine = 4-amino-2-methyl-5-(phosphooxymethyl)pyrimidine + CO + 5'-deoxyadenosine + formate + L-methionine + 3 H(+). It participates in cofactor biosynthesis; thiamine diphosphate biosynthesis. Functionally, catalyzes the synthesis of the hydroxymethylpyrimidine phosphate (HMP-P) moiety of thiamine from aminoimidazole ribotide (AIR) in a radical S-adenosyl-L-methionine (SAM)-dependent reaction. In Pectobacterium atrosepticum (strain SCRI 1043 / ATCC BAA-672) (Erwinia carotovora subsp. atroseptica), this protein is Phosphomethylpyrimidine synthase.